Consider the following 396-residue polypeptide: Protein Njmu-R1 (396 aa).

Positions 1–78 (MLPSLQESMD…SGDDFSLSLA (78 aa)) are disordered. 2 positions are modified to phosphoserine: Ser-8 and Ser-18. Residues 9–24 (MDGDEKELESSEEGGS) are compositionally biased toward acidic residues. The span at 58-67 (GSPSGTNAET) shows a compositional bias: polar residues.

Component of the complex WDR11 composed of C17orf75, FAM91A1 and WDR11; FAM91A1 and WDR11 are required for proper location of the complex. Interacts with TBC1D23; this interaction may be indirect and recruits TBC1D23 to AP-1-derived vesicles. In terms of tissue distribution, highly expressed in testis and also expressed in fetal testis.

It localises to the golgi apparatus. The protein localises to the trans-Golgi network. The protein resides in the cytoplasmic vesicle. Its function is as follows. As component of the WDR11 complex acts together with TBC1D23 to facilitate the golgin-mediated capture of vesicles generated using AP-1. May have a role in spermatogenesis. The polypeptide is Protein Njmu-R1 (C17orf75) (Homo sapiens (Human)).